The chain runs to 181 residues: Ribosome maturation factor RimM (181 aa).

Residues 97 to 170 (AGEFWLPDLM…RIEVVAIPGL (74 aa)) enclose the PRC barrel domain.

It belongs to the RimM family. As to quaternary structure, binds ribosomal protein uS19.

The protein resides in the cytoplasm. Functionally, an accessory protein needed during the final step in the assembly of 30S ribosomal subunit, possibly for assembly of the head region. Essential for efficient processing of 16S rRNA. May be needed both before and after RbfA during the maturation of 16S rRNA. It has affinity for free ribosomal 30S subunits but not for 70S ribosomes. This chain is Ribosome maturation factor RimM, found in Gloeobacter violaceus (strain ATCC 29082 / PCC 7421).